A 121-amino-acid polypeptide reads, in one-letter code: Large ribosomal subunit protein uL22 (121 aa).

This sequence belongs to the universal ribosomal protein uL22 family. In terms of assembly, part of the 50S ribosomal subunit.

In terms of biological role, this protein binds specifically to 23S rRNA; its binding is stimulated by other ribosomal proteins, e.g. L4, L17, and L20. It is important during the early stages of 50S assembly. It makes multiple contacts with different domains of the 23S rRNA in the assembled 50S subunit and ribosome. Functionally, the globular domain of the protein is located near the polypeptide exit tunnel on the outside of the subunit, while an extended beta-hairpin is found that lines the wall of the exit tunnel in the center of the 70S ribosome. This Arthrobacter sp. (strain FB24) protein is Large ribosomal subunit protein uL22.